The primary structure comprises 190 residues: Glycerol-3-phosphate acyltransferase 2 (190 aa).

5 helical membrane-spanning segments follow: residues 1-21 (MNIL…ALIV), 53-73 (VIVA…PLIL), 76-96 (TINP…SVFA), 110-130 (VFLF…VLTL), and 152-172 (LIFE…SIII).

This sequence belongs to the PlsY family. In terms of assembly, probably interacts with PlsX.

The protein localises to the cell membrane. The enzyme catalyses an acyl phosphate + sn-glycerol 3-phosphate = a 1-acyl-sn-glycero-3-phosphate + phosphate. Its pathway is lipid metabolism; phospholipid metabolism. In terms of biological role, catalyzes the transfer of an acyl group from acyl-phosphate (acyl-PO(4)) to glycerol-3-phosphate (G3P) to form lysophosphatidic acid (LPA). This enzyme utilizes acyl-phosphate as fatty acyl donor, but not acyl-CoA or acyl-ACP. This Bacillus anthracis protein is Glycerol-3-phosphate acyltransferase 2.